The chain runs to 335 residues: Glyceraldehyde-3-phosphate dehydrogenase (335 aa).

NAD(+) contacts are provided by residues 12–13 (RI), Asp-34, and Arg-79. D-glyceraldehyde 3-phosphate contacts are provided by residues 150-152 (SCT), Thr-181, 210-211 (TG), and Arg-233. The active-site Nucleophile is the Cys-151. Asn-315 is a binding site for NAD(+).

The protein belongs to the glyceraldehyde-3-phosphate dehydrogenase family. As to quaternary structure, homotetramer.

Its subcellular location is the cytoplasm. It catalyses the reaction D-glyceraldehyde 3-phosphate + phosphate + NAD(+) = (2R)-3-phospho-glyceroyl phosphate + NADH + H(+). It participates in carbohydrate degradation; glycolysis; pyruvate from D-glyceraldehyde 3-phosphate: step 1/5. The chain is Glyceraldehyde-3-phosphate dehydrogenase (GPD) from Ogataea parapolymorpha (strain ATCC 26012 / BCRC 20466 / JCM 22074 / NRRL Y-7560 / DL-1) (Yeast).